The sequence spans 633 residues: Breast carcinoma-amplified sequence 1 homolog (633 aa).

2 disordered regions span residues 1-34 (MGNQ…CVQN) and 57-422 (SSKD…KLFW). Polar residues-rich tracts occupy residues 24–34 (KVTSDNECVQN) and 57–68 (SSKDNVATSSPK). At S127 the chain carries Phosphoserine. Positions 278-288 (VDTTENSSSIM) are enriched in polar residues. A compositionally biased stretch (basic and acidic residues) spans 300-318 (TETKKDPEDTKATKADSVC). S328 carries the post-translational modification Phosphoserine. T330 carries the post-translational modification Phosphothreonine. Polar residues predominate over residues 359-378 (NSPTTSANLKSDKANFTPQE). Position 360 is a phosphoserine (S360). Positions 400 to 410 (SEGRDSGKEKA) are enriched in basic and acidic residues. 2 positions are modified to phosphoserine: S425 and S443. Residues 454–633 (ESSLQTVDLS…VSIGPVGKSK (180 aa)) are disordered. A compositionally biased stretch (basic and acidic residues) spans 471–481 (TDVKVKEESKP). The segment covering 510-522 (KDSSCQTSNSVEK) has biased composition (polar residues). Residue T523 is modified to Phosphothreonine. At S525 the chain carries Phosphoserine. The segment covering 537–555 (KNKETSSSKDKKSVDKKSA) has biased composition (basic and acidic residues). Phosphoserine occurs at positions 601 and 615. The interval 614–633 (MSDAQVQTDPVSIGPVGKSK) is interacts with DYNLL1 AND DYNLL2.

As to quaternary structure, homodimer. Interacts with DYNLL1 and DYNLL2. As to expression, highly expressed in the brain and, more specifically, in oligodendrocytes. Expressed in the Schwann cells (at protein level).

Its subcellular location is the cytoplasm. Functionally, required for myelination. This chain is Breast carcinoma-amplified sequence 1 homolog (Bcas1), found in Mus musculus (Mouse).